Reading from the N-terminus, the 571-residue chain is Proline--tRNA ligase (571 aa).

The protein belongs to the class-II aminoacyl-tRNA synthetase family. ProS type 1 subfamily. As to quaternary structure, homodimer.

It localises to the cytoplasm. It catalyses the reaction tRNA(Pro) + L-proline + ATP = L-prolyl-tRNA(Pro) + AMP + diphosphate. Functionally, catalyzes the attachment of proline to tRNA(Pro) in a two-step reaction: proline is first activated by ATP to form Pro-AMP and then transferred to the acceptor end of tRNA(Pro). As ProRS can inadvertently accommodate and process non-cognate amino acids such as alanine and cysteine, to avoid such errors it has two additional distinct editing activities against alanine. One activity is designated as 'pretransfer' editing and involves the tRNA(Pro)-independent hydrolysis of activated Ala-AMP. The other activity is designated 'posttransfer' editing and involves deacylation of mischarged Ala-tRNA(Pro). The misacylated Cys-tRNA(Pro) is not edited by ProRS. In Pseudomonas putida (strain W619), this protein is Proline--tRNA ligase.